The sequence spans 195 residues: Imidazoleglycerol-phosphate dehydratase (195 aa).

The protein belongs to the imidazoleglycerol-phosphate dehydratase family.

Its subcellular location is the cytoplasm. The enzyme catalyses D-erythro-1-(imidazol-4-yl)glycerol 3-phosphate = 3-(imidazol-4-yl)-2-oxopropyl phosphate + H2O. It participates in amino-acid biosynthesis; L-histidine biosynthesis; L-histidine from 5-phospho-alpha-D-ribose 1-diphosphate: step 6/9. The protein is Imidazoleglycerol-phosphate dehydratase of Geobacter sulfurreducens (strain ATCC 51573 / DSM 12127 / PCA).